The following is a 398-amino-acid chain: Serpin-Z2B (398 aa).

The interval 343–367 (GTEAAATTIAKVVLRQAPPPSVLDF) is RCL.

The protein belongs to the serpin family.

In terms of biological role, inhibits chymotrypsin, cathepsin G and trypsin in vitro. The protein is Serpin-Z2B of Triticum aestivum (Wheat).